The primary structure comprises 232 residues: MLNADQAELDKFGELAHRWWDPNSEFKPLHDINPLRIDWIDQAISLAGKRVLDVGCGGGLLSEGMAVRGANVTGIDLSEKPLGVAKLHLLETGQKVDYRKISVEELAEQMPGEFDAVTCLEMLEHVPNPSSVITACARLVKPGGQVFLSTLNRNPKSYLFAVIGAEYVLQMLPKGTHDYARFIKPSELARWAKMANLEPEELVGMSYNPLTKKYSLGKDTSVNYLMRTIRHV.

The S-adenosyl-L-methionine site is built by arginine 36, glycine 55, aspartate 76, and leucine 120.

The protein belongs to the methyltransferase superfamily. UbiG/COQ3 family.

The catalysed reaction is a 3-demethylubiquinol + S-adenosyl-L-methionine = a ubiquinol + S-adenosyl-L-homocysteine + H(+). The enzyme catalyses a 3-(all-trans-polyprenyl)benzene-1,2-diol + S-adenosyl-L-methionine = a 2-methoxy-6-(all-trans-polyprenyl)phenol + S-adenosyl-L-homocysteine + H(+). It participates in cofactor biosynthesis; ubiquinone biosynthesis. In terms of biological role, O-methyltransferase that catalyzes the 2 O-methylation steps in the ubiquinone biosynthetic pathway. The sequence is that of Ubiquinone biosynthesis O-methyltransferase from Dechloromonas aromatica (strain RCB).